Reading from the N-terminus, the 131-residue chain is Small ribosomal subunit protein uS11 (131 aa).

It belongs to the universal ribosomal protein uS11 family. Part of the 30S ribosomal subunit. Interacts with proteins S7 and S18. Binds to IF-3.

Functionally, located on the platform of the 30S subunit, it bridges several disparate RNA helices of the 16S rRNA. Forms part of the Shine-Dalgarno cleft in the 70S ribosome. The sequence is that of Small ribosomal subunit protein uS11 from Deinococcus deserti (strain DSM 17065 / CIP 109153 / LMG 22923 / VCD115).